The chain runs to 583 residues: Protein FMP25, mitochondrial (583 aa).

The N-terminal 25 residues, 1–25 (MSFRLFTRTSQRLPRLNWVSPIRRY), are a transit peptide targeting the mitochondrion. Residues 83–105 (AVGQGILILVVVGGLGTAYLRWP) traverse the membrane as a helical segment. RCC1 repeat units follow at residues 332–389 (KGQF…AIDK), 390–452 (TGEI…VTIR), 459–510 (DHHY…TETE), and 512–569 (ENEV…KEQR).

The protein resides in the mitochondrion membrane. This Saccharomyces cerevisiae (strain ATCC 204508 / S288c) (Baker's yeast) protein is Protein FMP25, mitochondrial (FMP25).